Here is a 326-residue protein sequence, read N- to C-terminus: ELMO domain-containing protein 1 (326 aa).

The region spanning 133–306 is the ELMO domain; the sequence is QHEEMLLKLW…KFRKRIIKQL (174 aa).

Its function is as follows. Acts as a GTPase-activating protein (GAP) toward guanine nucleotide exchange factors like ARL2, ARL3, ARF1 and ARF6, but not for GTPases outside the Arf family. This chain is ELMO domain-containing protein 1 (ELMOD1), found in Bos taurus (Bovine).